The primary structure comprises 376 residues: MTEEPEFSLGVEEEYLLVDAETGDLREAPDALMEACKAELADQVGPEFLRCQIEIGTPVAADVAQARDHLARLRGSIARHAAEFGLAPISVACHPVADWRAQGRTDKDRYNQISQEMGGVARRMLICGMHVHVGISDKDMRIDLMNQFSWFLPHLLALSASSPFWLGEDTLLASYRTTVFAGYPRTGLPPRLGSWAEFDRSVEMLTETGIIQDASKIWWDLRPSARFPTLETRVCDACPRLDDAITLVALVQATLRMLWRLSRQNLRWRQYDNFLLGENRWRATRYGSTEGLIDFGSRRILPFDEIAESWLAAIAEDADALDSQPAVAGLRDMIARGSAAERQRALFASAITAGATPQEAFRSIVGWLIDEFRRDL.

Belongs to the glutamate--cysteine ligase type 2 family. YbdK subfamily.

The catalysed reaction is L-cysteine + L-glutamate + ATP = gamma-L-glutamyl-L-cysteine + ADP + phosphate + H(+). ATP-dependent carboxylate-amine ligase which exhibits weak glutamate--cysteine ligase activity. The sequence is that of Putative glutamate--cysteine ligase 2 from Paracoccus denitrificans (strain Pd 1222).